The following is a 63-amino-acid chain: Cytochrome c oxidase subunit 7C, mitochondrial (63 aa).

A mitochondrion-targeting transit peptide spans 1-16 (MLGHSIRRFTTSVVRR). Topologically, residues 17–33 (SHYEEGPGKNLPFSVEN) are mitochondrial matrix. Lys-25 is modified (N6-acetyllysine; alternate). At Lys-25 the chain carries N6-succinyllysine; alternate. The chain crosses the membrane as a helical span at residues 34–60 (KWTLLVKMCLFFGSAFSVPFLIVRHQL). Over 61–63 (LKQ) the chain is Mitochondrial intermembrane.

It belongs to the cytochrome c oxidase VIIc family. Component of the cytochrome c oxidase (complex IV, CIV), a multisubunit enzyme composed of 14 subunits. The complex is composed of a catalytic core of 3 subunits MT-CO1, MT-CO2 and MT-CO3, encoded in the mitochondrial DNA, and 11 supernumerary subunits COX4I, COX5A, COX5B, COX6A, COX6B, COX6C, COX7A, COX7B, COX7C, COX8 and NDUFA4, which are encoded in the nuclear genome. The complex exists as a monomer or a dimer and forms supercomplexes (SCs) in the inner mitochondrial membrane with NADH-ubiquinone oxidoreductase (complex I, CI) and ubiquinol-cytochrome c oxidoreductase (cytochrome b-c1 complex, complex III, CIII), resulting in different assemblies (supercomplex SCI(1)III(2)IV(1) and megacomplex MCI(2)III(2)IV(2)). Interacts with RAB5IF.

The protein resides in the mitochondrion inner membrane. Its pathway is energy metabolism; oxidative phosphorylation. Its function is as follows. Component of the cytochrome c oxidase, the last enzyme in the mitochondrial electron transport chain which drives oxidative phosphorylation. The respiratory chain contains 3 multisubunit complexes succinate dehydrogenase (complex II, CII), ubiquinol-cytochrome c oxidoreductase (cytochrome b-c1 complex, complex III, CIII) and cytochrome c oxidase (complex IV, CIV), that cooperate to transfer electrons derived from NADH and succinate to molecular oxygen, creating an electrochemical gradient over the inner membrane that drives transmembrane transport and the ATP synthase. Cytochrome c oxidase is the component of the respiratory chain that catalyzes the reduction of oxygen to water. Electrons originating from reduced cytochrome c in the intermembrane space (IMS) are transferred via the dinuclear copper A center (CU(A)) of subunit 2 and heme A of subunit 1 to the active site in subunit 1, a binuclear center (BNC) formed by heme A3 and copper B (CU(B)). The BNC reduces molecular oxygen to 2 water molecules using 4 electrons from cytochrome c in the IMS and 4 protons from the mitochondrial matrix. This chain is Cytochrome c oxidase subunit 7C, mitochondrial (COX7C), found in Macaca fascicularis (Crab-eating macaque).